The chain runs to 49 residues: Large ribosomal subunit protein bL33 (49 aa).

This sequence belongs to the bacterial ribosomal protein bL33 family.

This chain is Large ribosomal subunit protein bL33, found in Syntrophobacter fumaroxidans (strain DSM 10017 / MPOB).